A 138-amino-acid chain; its full sequence is Ribosome-binding factor A (138 aa).

Residues 117–138 are disordered; it reads AEDGQHQEGPASADAKPESTEE.

The protein belongs to the RbfA family. In terms of assembly, monomer. Binds 30S ribosomal subunits, but not 50S ribosomal subunits or 70S ribosomes.

The protein localises to the cytoplasm. Its function is as follows. One of several proteins that assist in the late maturation steps of the functional core of the 30S ribosomal subunit. Associates with free 30S ribosomal subunits (but not with 30S subunits that are part of 70S ribosomes or polysomes). Required for efficient processing of 16S rRNA. May interact with the 5'-terminal helix region of 16S rRNA. The chain is Ribosome-binding factor A from Pseudomonas syringae pv. syringae (strain B728a).